The sequence spans 28 residues: Cruzioseptin-4 (28 aa).

E25 bears the Glutamic acid 1-amide mark. Residues 27–28 (EH) constitute a propeptide that is removed on maturation.

In terms of tissue distribution, expressed by the skin glands.

The protein localises to the secreted. Functionally, has antimicrobial activity. The polypeptide is Cruzioseptin-4 (Cruziohyla calcarifer (Splendid leaf frog)).